Reading from the N-terminus, the 299-residue chain is Putative cuticle collagen 155 (299 aa).

The first 27 residues, 1–27, serve as a signal peptide directing secretion; that stretch reads MEFEQRIKAYRFVAYSAVAFSVVAVLS. Triple-helical region regions lie at residues 103 to 132, 151 to 177, 181 to 202, and 216 to 278; these read GAAG…PGHP, GPPG…PGQD, GAPG…GAPG, and GAPG…VGEK. The disordered stretch occupies residues 107–278; it reads PAGTPGKPGR…SGTPGGVGEK (172 aa). The span at 129–161 shows a compositional bias: pro residues; sequence PGHPPQQPCDPITPPPCQPCPQGPPGPPGPPGP. Residues 163 to 172 are compositionally biased toward gly residues; it reads GDAGGNGNPG. Residues 173 to 197 are compositionally biased toward low complexity; sequence SPGQDGQPGAPGNKGPSGPNGNPGA. Residues 215–233 show a composition bias toward pro residues; it reads PGAPGPQGTPGPQGPPGQP. A compositionally biased stretch (low complexity) spans 250–268; it reads PNGNPGQPGADGNPGAPGQ.

Belongs to the cuticular collagen family. As to quaternary structure, collagen polypeptide chains are complexed within the cuticle by disulfide bonds and other types of covalent cross-links.

Its function is as follows. Nematode cuticles are composed largely of collagen-like proteins. The cuticle functions both as an exoskeleton and as a barrier to protect the worm from its environment. In Caenorhabditis elegans, this protein is Putative cuticle collagen 155 (col-155).